The sequence spans 534 residues: Peptide chain release factor 3 (534 aa).

One can recognise a tr-type G domain in the interval 9–278 (ARRRTFAIIS…FFVEHAPSPQ (270 aa)). Residues 18–25 (SHPDAGKT), 86–90 (DTPGH), and 140–143 (NKLD) contribute to the GTP site.

It belongs to the TRAFAC class translation factor GTPase superfamily. Classic translation factor GTPase family. PrfC subfamily.

The protein localises to the cytoplasm. Increases the formation of ribosomal termination complexes and stimulates activities of RF-1 and RF-2. It binds guanine nucleotides and has strong preference for UGA stop codons. It may interact directly with the ribosome. The stimulation of RF-1 and RF-2 is significantly reduced by GTP and GDP, but not by GMP. This Xylella fastidiosa (strain M12) protein is Peptide chain release factor 3.